The chain runs to 403 residues: Transcription factor E2F1 (403 aa).

Residues 44 to 85 form a cyclin A/CDK2 binding region; that stretch reads ATPQPSRPGPAPRRPALGRPPVKRKLNLETDHQYIAESLPAA. Residues 45–64 form a disordered region; that stretch reads TPQPSRPGPAPRRPALGRPP. The DNA-binding element occupies 87 to 171; sequence GRARIPGRGA…KNNIQWLGSQ (85 aa). The segment at 130–151 is leucine-zipper; it reads LNWAAEVLKVQKRRIYDITNVL. Residues 135 to 171 carry the DEF box motif; that stretch reads EVLKVQKRRIYDITNVLEGIQLITKKSKNNIQWLGSQ. The interval 172–261 is dimerization; sequence VAAGASSRQR…VSDPGEAFQV (90 aa). Residues 335–403 are transactivation; it reads PTEDVSLSPL…DFGDFTHLDF (69 aa). The interval 375–392 is retinoblastoma protein RB1 binding; it reads QDYHFGLEEGEGISELFD.

The protein belongs to the E2F/DP family. As to quaternary structure, component of the DRTF1/E2F transcription factor complex. Forms heterodimers with DP family members. The E2F1 complex binds specifically hypophosphorylated RB1, the interaction represses E2F1-driven transcription. During the cell cycle, RB1 becomes phosphorylated in mid-to-late G1 phase, detaches from the DRTF1/E2F complex, rendering E2F transcriptionally active. Viral oncoproteins, notably E1A, T-antigen and HPV E7, are capable of sequestering RB1, thus releasing the active complex.

It localises to the nucleus. In terms of biological role, transcription activator that binds DNA cooperatively with DP proteins through the E2 recognition site, 5'-TTTC[CG]CGC-3' found in the promoter region of a number of genes whose products are involved in cell cycle regulation or in DNA replication. The DRTF1/E2F complex functions in the control of cell-cycle progression from G1 to S phase. E2F1 binds preferentially RB1 in a cell-cycle dependent manner. It can mediate both cell proliferation and TP53/p53-dependent apoptosis. Blocks adipocyte differentiation by binding to specific promoters repressing CEBPA binding to its target gene promoters. Positively regulates transcription of RRP1B. The sequence is that of Transcription factor E2F1 from Gallus gallus (Chicken).